The primary structure comprises 370 residues: Ubiquitin-binding protein Rv1468c (370 aa).

A UBA region spans residues 1 to 72 (MSFVVANTEF…QVLSAQAAAF (72 aa)). A PE domain is found at 1–93 (MSFVVANTEF…AQAYAAAEAT (93 aa)).

It belongs to the mycobacterial PE family. PGRS subfamily. Interacts directly with host polyubiquitin in a UBA-dependent manner.

It localises to the secreted. The protein resides in the cell wall. Its subcellular location is the cell surface. In terms of biological role, mediates direct binding of host ubiquitin (Ub) to the mycobacterial surface, which triggers host xenophagy. Interaction between Rv1468c and ubiquitin recruits autophagy receptor p62 to deliver mycobacteria into LC3-associated autophagosomes. It could be a viable evolutionary strategy adopted by M.tuberculosis to maintain long-term intracellular survival through self-controlling its intracellular bacterial loads to avoid excessive host inflammatory immune responses. The protein is Ubiquitin-binding protein Rv1468c of Mycobacterium tuberculosis (strain ATCC 25618 / H37Rv).